The following is a 515-amino-acid chain: Tabersonine 6,7-epoxidase isoform 2 (515 aa).

A helical membrane pass occupies residues 1 to 21; it reads MEFVVSPFAFLIFFFILLKMI. Asn173, Asn259, and Asn352 each carry an N-linked (GlcNAc...) asparagine glycan. Position 449 (Cys449) interacts with heme.

The protein belongs to the cytochrome P450 family. Heme is required as a cofactor. In terms of tissue distribution, mainly expressed in aerial organs, including stems, leaves and flowers.

The protein resides in the endoplasmic reticulum membrane. The enzyme catalyses (-)-tabersonine + reduced [NADPH--hemoprotein reductase] + O2 = lochnericine + oxidized [NADPH--hemoprotein reductase] + H2O + H(+). The protein operates within alkaloid biosynthesis. Functionally, component of the monoterpenoid indole alkaloids (MIAs, e.g. echitovenine, tabersonine, lochnericine, 19-hydroxytabersonine and horhammericine) biosynthetic pathway; MIAs are used in cancer treatment and other medical applications. Cytochrome P450 catalyzing the conversion of tabersonine to lochnericine. This Catharanthus roseus (Madagascar periwinkle) protein is Tabersonine 6,7-epoxidase isoform 2.